Reading from the N-terminus, the 80-residue chain is U19-lycotoxin-Ls1b (80 aa).

The signal sequence occupies residues 1-22 (MSPKVQALIFIVGLITLLAAHA). Residues 23-34 (QEELSDNIESER) constitute a propeptide that is removed on maturation. Cystine bridges form between C36–C50, C43–C55, C49–C66, and C57–C64.

It belongs to the neurotoxin 02 (plectoxin) family. 05 (U19-lycotoxin) subfamily. Expressed by the venom gland.

It is found in the secreted. The chain is U19-lycotoxin-Ls1b from Lycosa singoriensis (Wolf spider).